Reading from the N-terminus, the 228-residue chain is ATP-dependent dethiobiotin synthetase BioD (228 aa).

13–18 (DIGKTF) contacts ATP. Thr-17 is a binding site for Mg(2+). Residue Lys-38 is part of the active site. Ser-42 provides a ligand contact to substrate. Residues Asp-55, 116–119 (EGSG), 179–180 (NK), and 208–210 (PKI) contribute to the ATP site. Positions 55 and 116 each coordinate Mg(2+).

The protein belongs to the dethiobiotin synthetase family. As to quaternary structure, homodimer. Mg(2+) is required as a cofactor.

It localises to the cytoplasm. The catalysed reaction is (7R,8S)-7,8-diammoniononanoate + CO2 + ATP = (4R,5S)-dethiobiotin + ADP + phosphate + 3 H(+). It functions in the pathway cofactor biosynthesis; biotin biosynthesis; biotin from 7,8-diaminononanoate: step 1/2. In terms of biological role, catalyzes a mechanistically unusual reaction, the ATP-dependent insertion of CO2 between the N7 and N8 nitrogen atoms of 7,8-diaminopelargonic acid (DAPA, also called 7,8-diammoniononanoate) to form a ureido ring. The protein is ATP-dependent dethiobiotin synthetase BioD of Clostridium perfringens (strain ATCC 13124 / DSM 756 / JCM 1290 / NCIMB 6125 / NCTC 8237 / Type A).